We begin with the raw amino-acid sequence, 132 residues long: ATP synthase epsilon chain (132 aa).

This sequence belongs to the ATPase epsilon chain family. F-type ATPases have 2 components, CF(1) - the catalytic core - and CF(0) - the membrane proton channel. CF(1) has five subunits: alpha(3), beta(3), gamma(1), delta(1), epsilon(1). CF(0) has three main subunits: a, b and c.

The protein resides in the cell membrane. Produces ATP from ADP in the presence of a proton gradient across the membrane. This is ATP synthase epsilon chain from Desulfitobacterium hafniense (strain DSM 10664 / DCB-2).